A 418-amino-acid polypeptide reads, in one-letter code: Homoaconitase large subunit (418 aa).

Residues Cys-292, Cys-352, and Cys-355 each contribute to the [4Fe-4S] cluster site.

Belongs to the aconitase/IPM isomerase family. In terms of assembly, heterodimer of HacA and HacB. The cofactor is [4Fe-4S] cluster.

The catalysed reaction is (2R,3S)-homoisocitrate = cis-homoaconitate + H2O. The protein operates within amino-acid biosynthesis; L-lysine biosynthesis via AAA pathway; L-alpha-aminoadipate from 2-oxoglutarate: step 3/5. With respect to regulation, is not inhibited by lysine. Its function is as follows. Catalyzes the reversible hydration of cis-homoaconitate ((Z)-but-1-ene-1,2,4-tricarboxylate) to homoisocitrate ((1R,2S)-1-hydroxybutane-1,2,4-tricarboxylate). Can catalyze neither the dehydration of (R)-homocitrate ((2R)-2-hydroxybutane-1,2,4-tricarboxylate) into cis-homoaconitate in vitro, nor the reverse reaction. Is not active toward (S)-homocitrate, cis-aconitate or citrate as substrate. This Thermus thermophilus (strain ATCC BAA-163 / DSM 7039 / HB27) protein is Homoaconitase large subunit (hacA).